Here is a 78-residue protein sequence, read N- to C-terminus: Large ribosomal subunit protein bL28 (78 aa).

Positions 1 to 20 (MSRVCQVTGKRPVTGNNRSH) are disordered.

It belongs to the bacterial ribosomal protein bL28 family.

The sequence is that of Large ribosomal subunit protein bL28 from Vibrio atlanticus (strain LGP32) (Vibrio splendidus (strain Mel32)).